The chain runs to 260 residues: Acetylglutamate kinase (260 aa).

Residues 46 to 47 (GG), arginine 68, and asparagine 160 contribute to the substrate site.

It belongs to the acetylglutamate kinase family. ArgB subfamily.

The protein localises to the cytoplasm. The catalysed reaction is N-acetyl-L-glutamate + ATP = N-acetyl-L-glutamyl 5-phosphate + ADP. Its pathway is amino-acid biosynthesis; L-arginine biosynthesis; N(2)-acetyl-L-ornithine from L-glutamate: step 2/4. Its function is as follows. Catalyzes the ATP-dependent phosphorylation of N-acetyl-L-glutamate. The protein is Acetylglutamate kinase of Shewanella sp. (strain ANA-3).